Reading from the N-terminus, the 374-residue chain is DNA-directed RNA polymerase subunit alpha (374 aa).

The tract at residues 1 to 257 (MSDNAHNLLY…KHFSIFENMD (257 aa)) is alpha N-terminal domain (alpha-NTD). An alpha C-terminal domain (alpha-CTD) region spans residues 274 to 374 (KDDILHKLIL…EKIRAKNIKG (101 aa)).

This sequence belongs to the RNA polymerase alpha chain family. In terms of assembly, homodimer. The RNAP catalytic core consists of 2 alpha, 1 beta, 1 beta' and 1 omega subunit. When a sigma factor is associated with the core the holoenzyme is formed, which can initiate transcription.

The enzyme catalyses RNA(n) + a ribonucleoside 5'-triphosphate = RNA(n+1) + diphosphate. DNA-dependent RNA polymerase catalyzes the transcription of DNA into RNA using the four ribonucleoside triphosphates as substrates. This chain is DNA-directed RNA polymerase subunit alpha, found in Chlamydia pneumoniae (Chlamydophila pneumoniae).